A 356-amino-acid chain; its full sequence is S-adenosylmethionine:tRNA ribosyltransferase-isomerase (356 aa).

This sequence belongs to the QueA family. Monomer.

Its subcellular location is the cytoplasm. It carries out the reaction 7-aminomethyl-7-carbaguanosine(34) in tRNA + S-adenosyl-L-methionine = epoxyqueuosine(34) in tRNA + adenine + L-methionine + 2 H(+). The protein operates within tRNA modification; tRNA-queuosine biosynthesis. In terms of biological role, transfers and isomerizes the ribose moiety from AdoMet to the 7-aminomethyl group of 7-deazaguanine (preQ1-tRNA) to give epoxyqueuosine (oQ-tRNA). The sequence is that of S-adenosylmethionine:tRNA ribosyltransferase-isomerase from Ralstonia nicotianae (strain ATCC BAA-1114 / GMI1000) (Ralstonia solanacearum).